The primary structure comprises 391 residues: Formate-dependent phosphoribosylglycinamide formyltransferase (391 aa).

Residues 18-19 and Glu-78 each bind N(1)-(5-phospho-beta-D-ribosyl)glycinamide; that span reads EL. ATP contacts are provided by residues Arg-110, Lys-151, 156 to 161, 191 to 194, and Glu-199; these read SSGKGQ and EEFI. The ATP-grasp domain maps to 115-305; sequence ELVSRDLKIK…EFELHLRAFL (191 aa). Residues Glu-264 and Glu-276 each coordinate Mg(2+). Residues Asp-283, Lys-353, and 360–361 each bind N(1)-(5-phospho-beta-D-ribosyl)glycinamide; that span reads RR.

Belongs to the PurK/PurT family. Homodimer.

It carries out the reaction N(1)-(5-phospho-beta-D-ribosyl)glycinamide + formate + ATP = N(2)-formyl-N(1)-(5-phospho-beta-D-ribosyl)glycinamide + ADP + phosphate + H(+). It participates in purine metabolism; IMP biosynthesis via de novo pathway; N(2)-formyl-N(1)-(5-phospho-D-ribosyl)glycinamide from N(1)-(5-phospho-D-ribosyl)glycinamide (formate route): step 1/1. In terms of biological role, involved in the de novo purine biosynthesis. Catalyzes the transfer of formate to 5-phospho-ribosyl-glycinamide (GAR), producing 5-phospho-ribosyl-N-formylglycinamide (FGAR). Formate is provided by PurU via hydrolysis of 10-formyl-tetrahydrofolate. This chain is Formate-dependent phosphoribosylglycinamide formyltransferase, found in Prochlorococcus marinus (strain MIT 9312).